The chain runs to 332 residues: MANIYYDEDASLDYLKDKTVAIIGYGSQGHAHALNLRDSGIKVIIGLLAGSRSIEKAKAEGFEVYSPDEAAKKADVIMILTPDTVQPALYQSAILPNLDEGNALAFAHGFNIHFGQIVPPSYVDVFLVAPKGPGHLVRWMYEEGKGVPGLFAVYQDFTGKAREIAMAYAKGIGATRAGLIETTFKEETETDLFGEQAVLCGGATALIKAGFETLIEAGYQPEVAYFECLHELKLIVDLIYQYGISGMRYSISDTARYGDVTRGKRVYEAVKPLYKKILEEIQEGEFAKEWILENVANRPHFNALVKKDEEHPVEKVGKELRKMMPWLGGRGL.

The KARI N-terminal Rossmann domain maps to 2–182 (ANIYYDEDAS…GATRAGLIET (181 aa)). Residues 25 to 28 (YGSQ), S51, S53, and 83 to 86 (DTVQ) each bind NADP(+). The active site involves H108. G134 provides a ligand contact to NADP(+). The KARI C-terminal knotted domain maps to 183–327 (TFKEETETDL…KELRKMMPWL (145 aa)). The Mg(2+) site is built by D191, E195, E227, and E231. Position 252 (S252) interacts with substrate.

Belongs to the ketol-acid reductoisomerase family. Mg(2+) serves as cofactor.

It carries out the reaction (2R)-2,3-dihydroxy-3-methylbutanoate + NADP(+) = (2S)-2-acetolactate + NADPH + H(+). The enzyme catalyses (2R,3R)-2,3-dihydroxy-3-methylpentanoate + NADP(+) = (S)-2-ethyl-2-hydroxy-3-oxobutanoate + NADPH + H(+). It functions in the pathway amino-acid biosynthesis; L-isoleucine biosynthesis; L-isoleucine from 2-oxobutanoate: step 2/4. Its pathway is amino-acid biosynthesis; L-valine biosynthesis; L-valine from pyruvate: step 2/4. Its function is as follows. Involved in the biosynthesis of branched-chain amino acids (BCAA). Catalyzes an alkyl-migration followed by a ketol-acid reduction of (S)-2-acetolactate (S2AL) to yield (R)-2,3-dihydroxy-isovalerate. In the isomerase reaction, S2AL is rearranged via a Mg-dependent methyl migration to produce 3-hydroxy-3-methyl-2-ketobutyrate (HMKB). In the reductase reaction, this 2-ketoacid undergoes a metal-dependent reduction by NADPH to yield (R)-2,3-dihydroxy-isovalerate. The chain is Ketol-acid reductoisomerase (NADP(+)) from Sulfurihydrogenibium sp. (strain YO3AOP1).